We begin with the raw amino-acid sequence, 812 residues long: G patch domain-containing protein 1 homolog (812 aa).

Residues 1–42 are disordered; the sequence is MNRKKLAAYGQEFEDDDEEGSSVSKKPTQIHEEIATDEKGKR. The segment covering 29–40 has biased composition (basic and acidic residues); that stretch reads QIHEEIATDEKG. The G-patch domain maps to 145 to 191; that stretch reads SNSIGVRMLRSMGWREGRGIGLANVKQKQKRGGESSEAQFDREQASK. Disordered stretches follow at residues 384 to 416 and 584 to 812; these read ANEVEKRDNERGGGEAEEDRDRRQRNRIEFPDE and NEIE…EEKK. Residues 586-609 are compositionally biased toward basic and acidic residues; the sequence is IEMRERLLKSRAQRGAEEKKRNQS. 2 stretches are compositionally biased toward acidic residues: residues 610–630 and 653–668; these read DDDDEKEYDDKDSDEEEENEA and DGADSDESNSEDEEAE. Residues 669–720 are compositionally biased toward basic and acidic residues; that stretch reads EKERQEILKKREEDLKRRREIVEKKEEENRKRVEKELKELENRDLLRVSKQQ. The span at 761–794 shows a compositional bias: basic residues; the sequence is MKKKKKDKKEKEKKKKSKKSKKSKKEKKTKRKHS. Positions 800 to 812 are enriched in acidic residues; it reads DSGDNSDGWEEKK.

This sequence belongs to the GPATCH1 family.

The polypeptide is G patch domain-containing protein 1 homolog (Caenorhabditis elegans).